Here is a 1423-residue protein sequence, read N- to C-terminus: Protein phosphatase Slingshot homolog 2 (1423 aa).

Disordered regions lie at residues 1–37 (MALV…PRSI) and 51–70 (LPRG…NKHA). Low complexity predominate over residues 9–18 (SPTPSTTSSP). S17, S25, and S36 each carry phosphoserine. The DEK-C domain maps to 248 to 303 (ERTERLIKTKLREIMMQKDLENITSKEIRTELEMQMVCNLREFKEFIDNEMIVILG). The Tyrosine-protein phosphatase domain occupies 307 to 448 (SPTQIFEHVF…LEEYQGILLA (142 aa)). C392 functions as the Phosphocysteine intermediate in the catalytic mechanism. 5 positions are modified to phosphoserine: S461, S487, S534, S631, and S633. Disordered regions lie at residues 698–725 (EMAA…DEDQ), 833–858 (HSST…MHSG), 878–950 (RQEQ…HCER), 967–991 (APQD…QRAV), 1021–1042 (SLGH…KQGL), 1074–1105 (PQVL…KGDC), and 1207–1226 (PEAC…DLSH). A compositionally biased stretch (polar residues) spans 884–904 (HGTASAGPTLSNRKNSKNDSS). 3 stretches are compositionally biased toward basic and acidic residues: residues 910–932 (PKWK…EPSK), 976–987 (SRSKKQEGDLKK), and 1033–1042 (PSKEGEKQGL). At S1217 the chain carries Phosphoserine. Position 1422 is a phosphothreonine (T1422).

The protein belongs to the protein-tyrosine phosphatase family. Interacts with filamentous actin. As to expression, expressed in brain, heart, liver, skeletal muscle, testis and thymus. Also expressed at lower levels in kidney, small intestine and spleen. Within testicular seminiferous tubules expressed in germ cells and spermatocytes, where it has a cytoplasmic localization, and round spermatids, where it concentrates in the acrosomal region next to the nucleus.

It localises to the cytoplasm. The protein localises to the cytoskeleton. The protein resides in the cell junction. Its subcellular location is the focal adhesion. It is found in the cytoplasmic vesicle. It localises to the secretory vesicle. The protein localises to the acrosome. It carries out the reaction O-phospho-L-tyrosyl-[protein] + H2O = L-tyrosyl-[protein] + phosphate. It catalyses the reaction O-phospho-L-seryl-[protein] + H2O = L-seryl-[protein] + phosphate. The catalysed reaction is O-phospho-L-threonyl-[protein] + H2O = L-threonyl-[protein] + phosphate. Functionally, protein phosphatase which regulates actin filament dynamics. Dephosphorylates and activates the actin binding/depolymerizing factor cofilin, which subsequently binds to actin filaments and stimulates their disassembly. Inhibitory phosphorylation of cofilin is mediated by LIMK1, which may also be dephosphorylated and inactivated by this protein. Required for spermatogenesis. Involved in acrosome biogenesis, probably by regulating cofilin-mediated actin cytoskeleton remodeling during proacrosomal vesicle fusion and/or Golgi to perinuclear vesicle trafficking. In Mus musculus (Mouse), this protein is Protein phosphatase Slingshot homolog 2 (Ssh2).